The sequence spans 327 residues: Cyclin-A3-3 (327 aa).

This sequence belongs to the cyclin family. Cyclin AB subfamily.

This chain is Cyclin-A3-3 (CYCA3-3), found in Arabidopsis thaliana (Mouse-ear cress).